A 55-amino-acid polypeptide reads, in one-letter code: Neurotoxin B-II (55 aa).

Residue proline 10 is modified to Hydroxyproline. 4 cysteine pairs are disulfide-bonded: cysteine 12/cysteine 48, cysteine 16/cysteine 52, cysteine 23/cysteine 41, and cysteine 26/cysteine 37.

Belongs to the worm B-toxin family.

It is found in the secreted. This toxin increases the excitability of nerves by delaying the inactivation of the voltage-gated sodium channel (Nav). Only acts on some crustacean. Neurotoxin B-II is less abundant, but 15-fold more toxic than neurotoxin B-VI. This Cerebratulus lacteus (Milky ribbon worm) protein is Neurotoxin B-II.